The following is a 157-amino-acid chain: Class 10 plant pathogenesis-related protein 2E (157 aa).

Asp8 serves as a coordination point for trans-zeatin. Positions 32, 35, and 38 each coordinate Ca(2+). 4 residues coordinate trans-zeatin: Glu60, His69, Tyr81, and Tyr83.

This sequence belongs to the BetVI family.

It is found in the cytoplasm. The protein resides in the cytosol. In terms of biological role, class II ribonuclease (RNase). Binds to cytokinins. Interacts with melatonin. The protein is Class 10 plant pathogenesis-related protein 2E of Lupinus luteus (European yellow lupine).